The chain runs to 363 residues: Double-strand-specific pac1 ribonuclease (363 aa).

2 disordered regions span residues 1 to 35 (MGRF…KRSS) and 92 to 138 (SRHD…PPLR). A compositionally biased stretch (low complexity) spans 13–22 (DSSSSASDSL). Residues 24-35 (RGRRSLGHKRSS) show a composition bias toward basic residues. Ser-122 is modified (phosphoserine). One can recognise an RNase III domain in the interval 139 to 262 (SEKLKEQVFM…YLGALILDGQ (124 aa)). In terms of domain architecture, DRBM spans 285-356 (RPIDKLAKSK…AMQALEVLAK (72 aa)).

Requires Mg(2+) as cofactor.

The catalysed reaction is Endonucleolytic cleavage to 5'-phosphomonoester.. Functionally, digests double-stranded RNA. Converts long double-stranded RNAs into short oligonucleotides, leaving 5'-phosphates on their cleavage products. Probably inhibits mating and meiosis by degrading a specific mRNA required for sexual development. This is Double-strand-specific pac1 ribonuclease (pac1) from Schizosaccharomyces pombe (strain 972 / ATCC 24843) (Fission yeast).